A 382-amino-acid polypeptide reads, in one-letter code: V-type proton ATPase subunit C 1 (382 aa).

Thr-2 bears the N-acetylthreonine mark.

The protein belongs to the V-ATPase C subunit family. In terms of assembly, V-ATPase is a heteromultimeric enzyme made up of two complexes: the ATP-hydrolytic V1 complex and the proton translocation V0 complex. The V1 complex consists of three catalytic AB heterodimers that form a heterohexamer, three peripheral stalks each consisting of EG heterodimers, one central rotor including subunits D and F, and the regulatory subunits C and H. The proton translocation complex V0 consists of the proton transport subunit a, a ring of proteolipid subunits c9c'', rotary subunit d, subunits e and f, and two accessory subunits.

Its function is as follows. Subunit of the V1 complex of vacuolar(H+)-ATPase (V-ATPase), a multisubunit enzyme composed of a peripheral complex (V1) that hydrolyzes ATP and a membrane integral complex (V0) that translocates protons. V-ATPase is responsible for acidifying and maintaining the pH of intracellular compartments and in some cell types, is targeted to the plasma membrane, where it is responsible for acidifying the extracellular environment. Subunit C is necessary for the assembly of the catalytic sector of the enzyme and is likely to have a specific function in its catalytic activity. This chain is V-type proton ATPase subunit C 1 (atp6v1c1), found in Xenopus tropicalis (Western clawed frog).